Here is a 342-residue protein sequence, read N- to C-terminus: S-adenosylmethionine:tRNA ribosyltransferase-isomerase (342 aa).

This sequence belongs to the QueA family. In terms of assembly, monomer.

The protein resides in the cytoplasm. It carries out the reaction 7-aminomethyl-7-carbaguanosine(34) in tRNA + S-adenosyl-L-methionine = epoxyqueuosine(34) in tRNA + adenine + L-methionine + 2 H(+). It functions in the pathway tRNA modification; tRNA-queuosine biosynthesis. Functionally, transfers and isomerizes the ribose moiety from AdoMet to the 7-aminomethyl group of 7-deazaguanine (preQ1-tRNA) to give epoxyqueuosine (oQ-tRNA). The chain is S-adenosylmethionine:tRNA ribosyltransferase-isomerase from Brevibacillus brevis (strain 47 / JCM 6285 / NBRC 100599).